A 510-amino-acid chain; its full sequence is NAD(P)H-quinone oxidoreductase subunit 2, chloroplastic (510 aa).

A run of 12 helical transmembrane segments spans residues 24–44 (LLLF…GLIL), 59–79 (WFYF…LFRW), 99–119 (IFQF…VEYI), 124–144 (MAIT…MFLC), 149–169 (LITI…LSGY), 183–203 (YLLM…WLYG), 229–249 (ISIA…PAPF), 295–315 (WHLL…LIAI), 323–343 (MLAY…IVGD), 354–374 (YMLF…LFGL), 395–415 (ALSS…AGFF), and 418–438 (LYLF…IGLL).

It belongs to the complex I subunit 2 family. As to quaternary structure, NDH is composed of at least 16 different subunits, 5 of which are encoded in the nucleus.

Its subcellular location is the plastid. The protein localises to the chloroplast thylakoid membrane. The enzyme catalyses a plastoquinone + NADH + (n+1) H(+)(in) = a plastoquinol + NAD(+) + n H(+)(out). It catalyses the reaction a plastoquinone + NADPH + (n+1) H(+)(in) = a plastoquinol + NADP(+) + n H(+)(out). Functionally, NDH shuttles electrons from NAD(P)H:plastoquinone, via FMN and iron-sulfur (Fe-S) centers, to quinones in the photosynthetic chain and possibly in a chloroplast respiratory chain. The immediate electron acceptor for the enzyme in this species is believed to be plastoquinone. Couples the redox reaction to proton translocation, and thus conserves the redox energy in a proton gradient. This is NAD(P)H-quinone oxidoreductase subunit 2, chloroplastic from Ananas comosus (Pineapple).